Here is a 198-residue protein sequence, read N- to C-terminus: ATP-dependent Clp protease proteolytic subunit 2 (198 aa).

Catalysis depends on Ser101, which acts as the Nucleophile. Residue His126 is part of the active site.

This sequence belongs to the peptidase S14 family. Fourteen ClpP subunits assemble into 2 heptameric rings which stack back to back to give a disk-like structure with a central cavity, resembling the structure of eukaryotic proteasomes.

It is found in the cytoplasm. It catalyses the reaction Hydrolysis of proteins to small peptides in the presence of ATP and magnesium. alpha-casein is the usual test substrate. In the absence of ATP, only oligopeptides shorter than five residues are hydrolyzed (such as succinyl-Leu-Tyr-|-NHMec, and Leu-Tyr-Leu-|-Tyr-Trp, in which cleavage of the -Tyr-|-Leu- and -Tyr-|-Trp bonds also occurs).. Its function is as follows. Cleaves peptides in various proteins in a process that requires ATP hydrolysis. Has a chymotrypsin-like activity. Plays a major role in the degradation of misfolded proteins. The protein is ATP-dependent Clp protease proteolytic subunit 2 of Thermosynechococcus vestitus (strain NIES-2133 / IAM M-273 / BP-1).